The following is a 395-amino-acid chain: Extracellular cysteine protease (395 aa).

Residues 1–30 (MKKKLSYMITIMLAFTLSLALGLFFNSAHA) form the signal peptide. Positions 31–221 (DSLPQKNGAN…TLEYQSTRNE (191 aa)) are excised as a propeptide. Residues Cys-245, His-341, and Asn-362 contribute to the active site.

The protein belongs to the peptidase C47 family. Post-translationally, proteolytically cleaved.

Its subcellular location is the secreted. It is found in the cell wall. In terms of biological role, cysteine protease able to cleave elastin, insulin, myoglobin, fibronectin, fibrinogen, HMW-kininogen, alpha-1-protease inhibitor and alpha-1-antitrypsin. Along with other extracellular proteases may contribute to the colonization and infection of human tissues. This Staphylococcus epidermidis (strain ATCC 35984 / DSM 28319 / BCRC 17069 / CCUG 31568 / BM 3577 / RP62A) protein is Extracellular cysteine protease (ecpA).